Here is a 623-residue protein sequence, read N- to C-terminus: MTQEKKKFDAEVGKILNLMIHSLYSNKEIFMRELISNASDACDKLRYLSQSNNTLVAGDSNFKITVKIDKNNGQIIIRDNGIGMNKEDLIENLGTIARSGTANFLKNLSGDSKKDNMLIGQFGVGFYSSFMVADKVTVTSRKAGEDKVYVWESDGLGEYIVSNSGKEFTRGTAIVLNIKKEEDNFLDHFRLKHIVKSYSDHIAVPIYFFDENGNSEIQLNSASALWTRPKLEITEEQYKEFYKSLSYTIDDPWITLHNKNEGAIEFTNLLFIPSSKTFDLFHPDRKRRVKLYIKRVFISDENIDLIPSYLRFLRGVVDSEDLPLNISRESLQHNSILDKIKNAITKRVLAELKKKKEESPEDYNKFWSNFGGALKEGLCESTTDHEKLLEVCIFRSALHNKMISLDEYIANFKEGQNTIYYLSGDNPDKLLSSPQIEGLLSKNIDVLLFTDTVDDFWVNVNSEYKGHAIKSATRSDIDVEQTTSSSEEKNTDSKKSDDEYKLLTDYFKETLGDLVKDVKISKKLTSSPACLAVSESAMDIRMERFLIEQKQIANASAKNLELNPKNKIIEKIFNDLKANNKNNKELVNLIFDQACILEGEPVADTGAFSKRLNDIVQKAILSL.

Residues 1 to 328 (MTQEKKKFDA…SEDLPLNISR (328 aa)) are a; substrate-binding. A b region spans residues 329 to 544 (ESLQHNSILD…ESAMDIRMER (216 aa)). Positions 545–623 (FLIEQKQIAN…DIVQKAILSL (79 aa)) are c.

The protein belongs to the heat shock protein 90 family. As to quaternary structure, homodimer.

It is found in the cytoplasm. Its function is as follows. Molecular chaperone. Has ATPase activity. This Rickettsia canadensis (strain McKiel) protein is Chaperone protein HtpG.